A 143-amino-acid chain; its full sequence is Large ribosomal subunit protein uL11 (143 aa).

Belongs to the universal ribosomal protein uL11 family. As to quaternary structure, part of the ribosomal stalk of the 50S ribosomal subunit. Interacts with L10 and the large rRNA to form the base of the stalk. L10 forms an elongated spine to which L12 dimers bind in a sequential fashion forming a multimeric L10(L12)X complex. In terms of processing, one or more lysine residues are methylated.

In terms of biological role, forms part of the ribosomal stalk which helps the ribosome interact with GTP-bound translation factors. This Caulobacter sp. (strain K31) protein is Large ribosomal subunit protein uL11.